The chain runs to 55 residues: uncharacterized protein (55 aa).

The chain crosses the membrane as a helical span at residues 7–24 (VALVGAVLATLTACTGHI).

The protein resides in the membrane. This is an uncharacterized protein from Escherichia coli O157:H7.